The primary structure comprises 269 residues: MSRKPSGLGRGLEALLPKTGAGVVRLPLASIRPNPRQPRKRFAEESLKELADSIREKGLLQPLLVRPQGDGYELVAGERRYRAALMAGLQEVPAVVKDLTDREALELALVENLQREDLSPVEEARGYQALLEMGLTQEEVARRVGKARSTVANALRLLQLPPEALEALERGEITAGHARALLMLEPEDRLWGLKEILEKGLSVRQAEALRERLAMAPKRSAEPSPLSLELSRHLGLPVRVVGGKKGKVVIQYRSLEELEALLRRLGYQA.

The tract at residues 1–20 (MSRKPSGLGRGLEALLPKTG) is stimulates ATPase activity of Soj by 8%. The segment at residues 137–156 (QEEVARRVGKARSTVANALR) is a DNA-binding region (H-T-H motif). The segment at 223–269 (PSPLSLELSRHLGLPVRVVGGKKGKVVIQYRSLEELEALLRRLGYQA) is required for DNA-binding; may be responsible for dimerization.

Belongs to the ParB family. In terms of assembly, homodimer, probably via the C-terminal 46 residues. Dimerization of the N-terminal H-T-H region may require DNA-binding. Probably interacts with ATPase Soj.

In terms of biological role, probably involved in chromosome partitioning. Binds to a plasmid centromere-like site parS. Stimulates the ATPase activity 10-fold of Soj; the first 20 residues may be responsible. The sequence is that of Chromosome-partitioning protein Spo0J (spo0C) from Thermus thermophilus (strain ATCC BAA-163 / DSM 7039 / HB27).